Consider the following 78-residue polypeptide: MSRVCQVTGKRPVTGNNRSHALNATKRRFLPNLHSHRFWVESEKRFVTLRVSAKGMRVIDKKGIDTVLSELRARGEKY.

It belongs to the bacterial ribosomal protein bL28 family.

The polypeptide is Large ribosomal subunit protein bL28 (Klebsiella pneumoniae (strain 342)).